Here is a 404-residue protein sequence, read N- to C-terminus: Serine/threonine transporter SstT (404 aa).

Helical transmembrane passes span 10 to 30 (ILGGNLVLRIAVGLVLGICLA), 53 to 73 (AIAPILVFVLVMASIANKEVG), 81 to 101 (ILVMYVLGTFVAAVTAVILSY), 140 to 160 (AITNGNFIGILAWSIGLGIAL), 177 to 197 (AVSFVVKVVIAFAPIGVFGLV), 215 to 235 (LLAVLLGAMAIVAFILNPLLV), 287 to 307 (IAIPLGANINMAGAAITITVL), and 329 to 349 (IVASICACGASGVAGGSLLLI).

It belongs to the dicarboxylate/amino acid:cation symporter (DAACS) (TC 2.A.23) family.

Its subcellular location is the cell inner membrane. It carries out the reaction L-serine(in) + Na(+)(in) = L-serine(out) + Na(+)(out). The enzyme catalyses L-threonine(in) + Na(+)(in) = L-threonine(out) + Na(+)(out). Its function is as follows. Involved in the import of serine and threonine into the cell, with the concomitant import of sodium (symport system). The polypeptide is Serine/threonine transporter SstT (Glaesserella parasuis serovar 5 (strain SH0165) (Haemophilus parasuis)).